The primary structure comprises 318 residues: Lymphatic vessel endothelial hyaluronic acid receptor 1 (318 aa).

Residues 1–23 form the signal peptide; that stretch reads MLQHTSLVLLLASIWTTRHPVQG. Residues 24-234 lie on the Extracellular side of the membrane; it reads ADLVQDLSIS…EAAGFGGVPT (211 aa). Residues 39 to 129 form the Link domain; sequence GVALVGRNKN…SQKFKAYCHN (91 aa). The N-linked (GlcNAc...) asparagine glycan is linked to Asn-52. Disulfide bonds link Cys-60-Cys-127 and Cys-84-Cys-105. N-linked (GlcNAc...) asparagine glycosylation occurs at Asn-129. A helical membrane pass occupies residues 235–255; sequence ALLVLALLFFGAAAVLAVCYV. The Cytoplasmic portion of the chain corresponds to 256-318; sequence KRYVKAFPFT…TTVRCLEAEV (63 aa). The segment covering 284-305 has biased composition (basic and acidic residues); that stretch reads ADDVNANEESKKTIKNPEEAKS. The segment at 284–318 is disordered; sequence ADDVNANEESKKTIKNPEEAKSPPKTTVRCLEAEV.

As to quaternary structure, homodimer; disulfide-linked. Interacts with PDGFB and IGFBP3. Forms a transient ternary complex with PDGFB and PDGFRB in TGN. Post-translationally, O-glycosylated.

It is found in the membrane. Ligand-specific transporter trafficking between intracellular organelles (TGN) and the plasma membrane. Plays a role in autocrine regulation of cell growth mediated by growth regulators containing cell surface retention sequence binding (CRS). May act as a hyaluronan (HA) transporter, either mediating its uptake for catabolism within lymphatic endothelial cells themselves, or its transport into the lumen of afferent lymphatic vessels for subsequent re-uptake and degradation in lymph nodes. Binds to pericelluar hyaluronan matrices deposited on the surface of leukocytes and facilitates cell adhesion and migration through lymphatic endothelium. This Mus musculus (Mouse) protein is Lymphatic vessel endothelial hyaluronic acid receptor 1 (Lyve1).